The primary structure comprises 633 residues: RpoH suppressor (633 aa).

Positions 11–410 (LVMKGGITSG…SSNFPIHLFD (400 aa)) constitute a PNPLA domain. 3 consecutive transmembrane segments (helical) span residues 38-58 (NIGGTSAGAIAAAACAAAAVG), 133-153 (IAPVETLLLLAALAGLAYAVG), and 159-179 (IAAALPAAICAYLGGVVFAVL). A GXSXG motif is present at residues 41–45 (GTSAG). Serine 43 (nucleophile) is an active-site residue. The tract at residues 342 to 380 (ARRESLPGSDGENEAEDTTSDEDEQKTVLDSTEALTTGG) is disordered. Over residues 352–365 (GENEAEDTTSDEDE) the composition is skewed to acidic residues. Aspartate 397 (proton acceptor) is an active-site residue. Positions 397–399 (DGG) match the DGA/G motif. Residues 605 to 624 (EGEKWSGEGPDLTKTAPRPL) are disordered.

The protein resides in the cell membrane. Its function is as follows. This protein is non-essential for R.meliloti growth, but induces a heat-shock response in temperature-sensitive E.coli K165 by elevating levels of sigma 32 (mechanism unknown). The protein is RpoH suppressor (suhR) of Rhizobium meliloti (strain 1021) (Ensifer meliloti).